The primary structure comprises 362 residues: tRNA-specific 2-thiouridylase MnmA 1 (362 aa).

ATP contacts are provided by residues Gly12–Ser19 and Met38. Cys104 acts as the Nucleophile in catalysis. Cys104 and Cys200 are disulfide-bonded. Residue Gly128 participates in ATP binding. Residues Lys150–Gln152 are interaction with tRNA. The active-site Cysteine persulfide intermediate is Cys200. The tract at residues Arg306–Tyr307 is interaction with tRNA.

The protein belongs to the MnmA/TRMU family.

The protein localises to the cytoplasm. It catalyses the reaction S-sulfanyl-L-cysteinyl-[protein] + uridine(34) in tRNA + AH2 + ATP = 2-thiouridine(34) in tRNA + L-cysteinyl-[protein] + A + AMP + diphosphate + H(+). Its function is as follows. Catalyzes the 2-thiolation of uridine at the wobble position (U34) of tRNA, leading to the formation of s(2)U34. The sequence is that of tRNA-specific 2-thiouridylase MnmA 1 from Clostridium tetani (strain Massachusetts / E88).